Reading from the N-terminus, the 213-residue chain is Kynurenine formamidase (213 aa).

Substrate is bound at residue W18. Residues H48, H52, and D54 each contribute to the Zn(2+) site. H58 acts as the Proton donor/acceptor in catalysis. Zn(2+) contacts are provided by H160 and E172.

Belongs to the Cyclase 1 superfamily. KynB family. In terms of assembly, homodimer. The cofactor is Zn(2+).

It carries out the reaction N-formyl-L-kynurenine + H2O = L-kynurenine + formate + H(+). It participates in amino-acid degradation; L-tryptophan degradation via kynurenine pathway; L-kynurenine from L-tryptophan: step 2/2. Its function is as follows. Catalyzes the hydrolysis of N-formyl-L-kynurenine to L-kynurenine, the second step in the kynurenine pathway of tryptophan degradation. This is Kynurenine formamidase from Burkholderia vietnamiensis (strain G4 / LMG 22486) (Burkholderia cepacia (strain R1808)).